Consider the following 231-residue polypeptide: Small ribosomal subunit protein uS3 (231 aa).

The region spanning I39–K108 is the KH type-2 domain.

It belongs to the universal ribosomal protein uS3 family. Part of the 30S ribosomal subunit. Forms a tight complex with proteins S10 and S14.

Functionally, binds the lower part of the 30S subunit head. Binds mRNA in the 70S ribosome, positioning it for translation. This chain is Small ribosomal subunit protein uS3, found in Aquifex pyrophilus.